A 574-amino-acid chain; its full sequence is MATRAPLAPPPNETEASVSRITREGKKLTYKLNVMQQPERARACGAGAKSSADRRPVDPPPVVELRVYESDPNDDLNKTDITFAYNANFFLYATLETARPMAQGRFAPNPTCPVLTGVPVAGVAYLDRPSQAGYFIFPDLSVRHEGVYRLNFHLYEETKESKDANENAPIQSMSNPMPSKPMAPKSFLEFRLEVVSVPFTVFSAKKFPGLATSTSLSRVIAEQGCRVRIRRDVRMRRRGEKRTDDYDYDEERVYRSSDRISTPDTHGYAGTPVERPRSTSTSTVDPSFPYGVDAQRRSSGATEYGFQGAQPYQRPLPPAPGPAPAAVSTPAPPAPPAPPSHNPGYQSHLSFGSTQTQYPAPQLPPTPQTASTLAAPYSPHPSYSHARNPSTSAEYETPGYSYPPSRMSTERSSYPKNGLPPLRLEPPKPLNMPSGEPRSSDPNAYHSVAQSAAPRSQTPSSSLVPSLPPLKALSGDYPNNLSQSSSSTSQSPSHDLGAGKKFFWDTGASLSKRSYEDSFGHDDRPLYNGMRPDTESYPRRLSDASRNFYNETRDEMAYKRANGRMATKISPALQ.

Disordered stretches follow at residues 1–22 (MATRAPLAPPPNETEASVSRIT), 39–60 (ERARACGAGAKSSADRRPVDPP), 255–500 (RSSD…GAGK), and 513–540 (RSYEDSFGHDDRPLYNGMRPDTESYPRR). Residues 25–230 (GKKLTYKLNV…AEQGCRVRIR (206 aa)) form the Velvet domain. A Nuclear localization signal motif is present at residues 39-44 (ERARAC). 2 stretches are compositionally biased toward pro residues: residues 314-323 (RPLPPAPGPA) and 330-341 (PAPPAPPAPPSH). 4 stretches are compositionally biased toward polar residues: residues 343–353 (PGYQSHLSFGS), 385–394 (HARNPSTSAE), 406–415 (RMSTERSSYP), and 448–458 (VAQSAAPRSQT). Positions 457–498 (QTPSSSLVPSLPPLKALSGDYPNNLSQSSSSTSQSPSHDLGA) are PEST. Low complexity-rich tracts occupy residues 459–474 (PSSSLVPSLPPLKALS) and 482–493 (SQSSSSTSQSPS). A compositionally biased stretch (basic and acidic residues) spans 513 to 525 (RSYEDSFGHDDRP).

The protein belongs to the velvet family. VeA subfamily. In terms of assembly, component of the heterotrimeric velvet complex composed of laeA, veA and velB; VeA acting as a bridging protein between laeA and velB.

It localises to the nucleus. The protein resides in the cytoplasm. Component of the velvet transcription factor complex that controls sexual/asexual developmental ratio in response to light, promoting sexual development in the darkness while stimulating asexual sporulation under illumination. The velvet complex hat acts as a global regulator for secondary metabolite gene expression. Controls the expression of the cyclopiazonic acid, aflatrem, and aflatoxin gene clusters. Controls the expression of the sclerotium-specific pigment asparasone A gene cluster. Controls the expression of the aflavarin gene cluster. also controls the production of hydrolases and other extracellular proteins during growth on natural starch-based substrates. Regulates genes involved in the High Osmolarity Glycerol (HOG) signaling pathway. Required for the conidial and sclerotial density-dependent production. This Aspergillus flavus (strain ATCC 200026 / FGSC A1120 / IAM 13836 / NRRL 3357 / JCM 12722 / SRRC 167) protein is Developmental and secondary metabolism regulator veA.